The following is a 352-amino-acid chain: DNA polymerase IV (352 aa).

The UmuC domain maps to 6 to 187 (IIHIDCDCFY…LPVSKLHGVG (182 aa)). Mg(2+)-binding residues include aspartate 10 and aspartate 105. Residue glutamate 106 is part of the active site.

It belongs to the DNA polymerase type-Y family. Monomer. It depends on Mg(2+) as a cofactor.

The protein localises to the cytoplasm. The enzyme catalyses DNA(n) + a 2'-deoxyribonucleoside 5'-triphosphate = DNA(n+1) + diphosphate. Functionally, poorly processive, error-prone DNA polymerase involved in untargeted mutagenesis. Copies undamaged DNA at stalled replication forks, which arise in vivo from mismatched or misaligned primer ends. These misaligned primers can be extended by PolIV. Exhibits no 3'-5' exonuclease (proofreading) activity. May be involved in translesional synthesis, in conjunction with the beta clamp from PolIII. This is DNA polymerase IV from Ectopseudomonas mendocina (strain ymp) (Pseudomonas mendocina).